Reading from the N-terminus, the 204-residue chain is B9 domain-containing protein 1 (204 aa).

A C2 B9-type domain is found at 9-127 (FLLMVNGQVE…TIPMFVPEST (119 aa)). Residues 182-204 (GYDTGPSDTQGVLGPSPPQSFPQ) are disordered.

The protein belongs to the B9D family. As to quaternary structure, part of the tectonic-like complex (also named B9 complex).

The protein localises to the cytoplasm. Its subcellular location is the cytoskeleton. The protein resides in the cilium basal body. It localises to the cilium axoneme. Functionally, component of the tectonic-like complex, a complex localized at the transition zone of primary cilia and acting as a barrier that prevents diffusion of transmembrane proteins between the cilia and plasma membranes. Required for ciliogenesis and sonic hedgehog/SHH signaling. This chain is B9 domain-containing protein 1 (B9D1), found in Homo sapiens (Human).